A 105-amino-acid polypeptide reads, in one-letter code: MIASKFGIGQQVRHSLLGYLGVVVDIDPEYSLDEPSPDELAVNDELRAAPWYHVVMEDDDGQPVRTYLAEAQLRSEMRDEHPEQPSMDELARTIRKQLQAPRLRN.

Belongs to the HspQ family.

The protein localises to the cytoplasm. In terms of biological role, involved in the degradation of certain denaturated proteins, including DnaA, during heat shock stress. This Salmonella choleraesuis (strain SC-B67) protein is Heat shock protein HspQ.